Here is a 237-residue protein sequence, read N- to C-terminus: Sugar fermentation stimulation protein homolog (237 aa).

Belongs to the SfsA family.

The chain is Sugar fermentation stimulation protein homolog from Pseudomonas putida (strain GB-1).